Reading from the N-terminus, the 581-residue chain is NADH-quinone oxidoreductase subunit C/D (581 aa).

The NADH dehydrogenase I subunit C stretch occupies residues 1–172 (MSGTDLVSEL…PLFNMTAALF (172 aa)). Positions 196 to 581 (ELMILNYGPH…IDYVMSDVDR (386 aa)) are NADH dehydrogenase I subunit D.

This sequence in the N-terminal section; belongs to the complex I 30 kDa subunit family. In the C-terminal section; belongs to the complex I 49 kDa subunit family. NDH-1 is composed of 13 different subunits. Subunits NuoB, CD, E, F, and G constitute the peripheral sector of the complex.

Its subcellular location is the cell inner membrane. It carries out the reaction a quinone + NADH + 5 H(+)(in) = a quinol + NAD(+) + 4 H(+)(out). Its function is as follows. NDH-1 shuttles electrons from NADH, via FMN and iron-sulfur (Fe-S) centers, to quinones in the respiratory chain. The immediate electron acceptor for the enzyme in this species is believed to be ubiquinone. Couples the redox reaction to proton translocation (for every two electrons transferred, four hydrogen ions are translocated across the cytoplasmic membrane), and thus conserves the redox energy in a proton gradient. This Rhodopseudomonas palustris (strain BisB5) protein is NADH-quinone oxidoreductase subunit C/D.